Here is a 389-residue protein sequence, read N- to C-terminus: NAD-dependent protein deacetylase sirtuin-2 (389 aa).

The segment at 1-34 (MAEPDPSHPLETQAGKVQEAQDSDSDSEGGAAGG) is disordered. An N-acetylalanine modification is found at A2. Phosphoserine is present on residues S23, S25, and S27. A Nuclear export signal motif is present at residues 41–51 (LRNLFSQTLSL). S53 bears the Phosphoserine mark. A Deacetylase sirtuin-type domain is found at 57 to 338 (RLLDELTLEG…LALAELLGWK (282 aa)). NAD(+)-binding positions include 85 to 89 (AGIST) and 95 to 97 (DFR). S100 is modified (phosphoserine). 167–170 (QNID) contacts NAD(+). The active-site Proton acceptor is the H187. 2 residues coordinate Zn(2+): C195 and C200. A Phosphoserine modification is found at S207. Residues C221 and C224 each contribute to the Zn(2+) site. Residues 262 to 263 (TS), 286 to 288 (NKE), and C324 contribute to the NAD(+) site. Residues 351 to 389 (SIDAQSGAGVPNPSTSASPKKSPPPAKDEARTTEREKPQ) form a disordered region. Residues 361–370 (PNPSTSASPK) show a composition bias toward low complexity. At S368 the chain carries Phosphoserine; by CDK2 and CDK5. The residue at position 372 (S372) is a Phosphoserine. The span at 376 to 389 (AKDEARTTEREKPQ) shows a compositional bias: basic and acidic residues.

Belongs to the sirtuin family. Class I subfamily. In terms of assembly, interacts with CDC20, FOXO3 and FZR1. Associates with microtubules in primary cortical mature neurons. Homotrimer. Isoform 1 and isoform 2 interact (via both phosphorylated, unphosphorylated, active or inactive forms) with HDAC6; the interaction is necessary for the complex to interact with alpha-tubulin, suggesting that these proteins belong to a large complex that deacetylates the cytoskeleton. Interacts with FOXO1; the interaction is disrupted upon serum-starvation or oxidative stress, leading to increased level of acetylated FOXO1 and induction of autophagy. Interacts with RELA; the interaction occurs in the cytoplasm and is increased in a TNF-alpha-dependent manner. Interacts with HOXA10; the interaction is direct. Interacts with YWHAB and YWHAG; the interactions occur in a AKT-dependent manner and increase SIRT2-dependent TP53 deacetylation. Interacts with MAPK1/ERK2 and MAPK3/ERK1; the interactions increase SIRT2 stability and deacetylation activity. Interacts (phosphorylated form) with KMT5A isoform 2; the interaction is direct, stimulates KMT5A-mediated methyltransferase activity on histone at 'Lys-20' (H4K20me1) and is increased in a H(2)O(2)-induced oxidative stress-dependent manner. Interacts with G6PD; the interaction is enhanced by H(2)O(2) treatment. Interacts with a G1/S-specific cyclin E-CDK2 complex. Interacts with AURKA, CDK5R1 (p35 form) and CDK5 and HIF1A. Isoform 1, isoform 2 and isoform 5 interact (via C-terminus region) with EP300. Interacts with the tRNA ligase SARS1; recruited to the VEGFA promoter via interaction with SARS1. Interacts with BEX4; negatively regulates alpha-tubulin deacetylation by SIRT2. The cofactor is Zn(2+). Post-translationally, phosphorylated at phosphoserine and phosphothreonine. Phosphorylated at Ser-368 by a mitotic kinase CDK1/cyclin B at the G2/M transition; phosphorylation regulates the delay in cell-cycle progression. Phosphorylated at Ser-368 by a mitotic kinase G1/S-specific cyclin E/Cdk2 complex; phosphorylation inactivates SIRT2-mediated alpha-tubulin deacetylation and thereby negatively regulates cell adhesion, cell migration and neurite outgrowth during neuronal differentiation. Phosphorylated by cyclin A/Cdk2 and p35-Cdk5 complexes and to a lesser extent by the cyclin D3/Cdk4 and cyclin B/Cdk1, in vitro. Dephosphorylated at Ser-368 by CDC14A and CDC14B around early anaphase. Acetylated by EP300; acetylation leads both to the decreased of SIRT2-mediated alpha-tubulin deacetylase activity and SIRT2-mediated down-regulation of TP53 transcriptional activity. In terms of processing, ubiquitinated. In terms of tissue distribution, isoform 1 is expressed in heart, liver and skeletal muscle, weakly expressed in the cortex. Isoform 2 is strongly expressed in the cortex, weakly expressed in heart and liver. Weakly expressed in several malignancies including breast, liver, brain, kidney and prostate cancers compared to normal tissues. Weakly expressed in glioma cell lines compared to normal brain tissues (at protein level). Widely expressed. Highly expressed in heart, brain and skeletal muscle, while it is weakly expressed in placenta and lung. Down-regulated in many gliomas suggesting that it may act as a tumor suppressor gene in human gliomas possibly through the regulation of microtubule network.

It localises to the nucleus. The protein localises to the cytoplasm. Its subcellular location is the perinuclear region. The protein resides in the cytoskeleton. It is found in the microtubule organizing center. It localises to the centrosome. The protein localises to the centriole. Its subcellular location is the spindle. The protein resides in the midbody. It is found in the chromosome. It localises to the perikaryon. The protein localises to the cell projection. Its subcellular location is the growth cone. The protein resides in the myelin membrane. The catalysed reaction is N(6)-acetyl-L-lysyl-[protein] + NAD(+) + H2O = 2''-O-acetyl-ADP-D-ribose + nicotinamide + L-lysyl-[protein]. The enzyme catalyses N(6)-tetradecanoyl-L-lysyl-[protein] + NAD(+) + H2O = 2''-O-tetradecanoyl-ADP-D-ribose + nicotinamide + L-lysyl-[protein]. It catalyses the reaction N(6)-hexadecanoyl-L-lysyl-[protein] + NAD(+) + H2O = 2''-O-hexadecanoyl-ADP-D-ribose + nicotinamide + L-lysyl-[protein]. Inhibited by Sirtinol, A3 and M15 small molecules. Inhibited by nicotinamide. Inhibited by a macrocyclic peptide inhibitor S2iL5. Inhibited by EP300-induced acetylation. Functionally, NAD-dependent protein deacetylase, which deacetylates internal lysines on histone and alpha-tubulin as well as many other proteins such as key transcription factors. Participates in the modulation of multiple and diverse biological processes such as cell cycle control, genomic integrity, microtubule dynamics, cell differentiation, metabolic networks, and autophagy. Plays a major role in the control of cell cycle progression and genomic stability. Functions in the antephase checkpoint preventing precocious mitotic entry in response to microtubule stress agents, and hence allowing proper inheritance of chromosomes. Positively regulates the anaphase promoting complex/cyclosome (APC/C) ubiquitin ligase complex activity by deacetylating CDC20 and FZR1, then allowing progression through mitosis. Associates both with chromatin at transcriptional start sites (TSSs) and enhancers of active genes. Plays a role in cell cycle and chromatin compaction through epigenetic modulation of the regulation of histone H4 'Lys-20' methylation (H4K20me1) during early mitosis. Specifically deacetylates histone H4 at 'Lys-16' (H4K16ac) between the G2/M transition and metaphase enabling H4K20me1 deposition by KMT5A leading to ulterior levels of H4K20me2 and H4K20me3 deposition throughout cell cycle, and mitotic S-phase progression. Deacetylates KMT5A modulating KMT5A chromatin localization during the mitotic stress response. Also deacetylates histone H3 at 'Lys-57' (H3K56ac) during the mitotic G2/M transition. Upon bacterium Listeria monocytogenes infection, deacetylates 'Lys-18' of histone H3 in a receptor tyrosine kinase MET- and PI3K/Akt-dependent manner, thereby inhibiting transcriptional activity and promoting late stages of listeria infection. During oocyte meiosis progression, may deacetylate histone H4 at 'Lys-16' (H4K16ac) and alpha-tubulin, regulating spindle assembly and chromosome alignment by influencing microtubule dynamics and kinetochore function. Deacetylates histone H4 at 'Lys-16' (H4K16ac) at the VEGFA promoter and thereby contributes to regulate expression of VEGFA, a key regulator of angiogenesis. Deacetylates alpha-tubulin at 'Lys-40' and hence controls neuronal motility, oligodendroglial cell arbor projection processes and proliferation of non-neuronal cells. Phosphorylation at Ser-368 by a G1/S-specific cyclin E-CDK2 complex inactivates SIRT2-mediated alpha-tubulin deacetylation, negatively regulating cell adhesion, cell migration and neurite outgrowth during neuronal differentiation. Deacetylates PARD3 and participates in the regulation of Schwann cell peripheral myelination formation during early postnatal development and during postinjury remyelination. Involved in several cellular metabolic pathways. Plays a role in the regulation of blood glucose homeostasis by deacetylating and stabilizing phosphoenolpyruvate carboxykinase PCK1 activity in response to low nutrient availability. Acts as a key regulator in the pentose phosphate pathway (PPP) by deacetylating and activating the glucose-6-phosphate G6PD enzyme, and therefore, stimulates the production of cytosolic NADPH to counteract oxidative damage. Maintains energy homeostasis in response to nutrient deprivation as well as energy expenditure by inhibiting adipogenesis and promoting lipolysis. Attenuates adipocyte differentiation by deacetylating and promoting FOXO1 interaction to PPARG and subsequent repression of PPARG-dependent transcriptional activity. Plays a role in the regulation of lysosome-mediated degradation of protein aggregates by autophagy in neuronal cells. Deacetylates FOXO1 in response to oxidative stress or serum deprivation, thereby negatively regulating FOXO1-mediated autophagy. Deacetylates a broad range of transcription factors and co-regulators regulating target gene expression. Deacetylates transcriptional factor FOXO3 stimulating the ubiquitin ligase SCF(SKP2)-mediated FOXO3 ubiquitination and degradation. Deacetylates HIF1A and therefore promotes HIF1A degradation and inhibition of HIF1A transcriptional activity in tumor cells in response to hypoxia. Deacetylates RELA in the cytoplasm inhibiting NF-kappaB-dependent transcription activation upon TNF-alpha stimulation. Inhibits transcriptional activation by deacetylating p53/TP53 and EP300. Also deacetylates EIF5A. Functions as a negative regulator on oxidative stress-tolerance in response to anoxia-reoxygenation conditions. Plays a role as tumor suppressor. In addition to protein deacetylase activity, also has activity toward long-chain fatty acyl groups and mediates protein-lysine demyristoylation and depalmitoylation of target proteins, such as ARF6 and KRAS, thereby regulating their association with membranes. In terms of biological role, deacetylates EP300, alpha-tubulin and histone H3 and H4. Lacks deacetylation activity, at least toward known SIRT2 targets. This Homo sapiens (Human) protein is NAD-dependent protein deacetylase sirtuin-2 (SIRT2).